A 160-amino-acid polypeptide reads, in one-letter code: Putative oxygenase ATEG_00330 (160 aa).

Residues 24–100 (HYFGTALHAK…RNIAADPEFA (77 aa)) form the EthD domain.

It belongs to the tpcK family.

Functionally, putative oxygenase; part of the gene cluster that mediates the biosynthesis of isoflavipucine. The PKS part of the PKS-NRPS ATEG_00325 probably assembles a triketide from an acetyl starter and two malonyl-CoA extender units. The poly-beta-keto intermediate would then be fused to the leucine unit by the NRPS part. The resulting amide would be liberated from the PKS-NRPS through reductive release of the linear PKS-NRPS product from the enzyme complex. Further steps in isoflapucine synthesis include a cyclization step, an oxidation step, a hydrolysis step involving a trans-amidation, and an additional oxidation step, leading to flavipucine. Formation of isoflavipucine from flavipucine requires an unusual rearrangement. Alternative rearrangement reactions could build up rubrobramide, representing a branching of flavipucine biosynthesis. The enzymes involved in the post-PKS-NRPS steps have not been identified yet, but the putative oxygenases ATEG_003329 and ATEG_00330 encoded by the cluster could play a role. The chain is Putative oxygenase ATEG_00330 from Aspergillus terreus (strain NIH 2624 / FGSC A1156).